The primary structure comprises 350 residues: tRNA dimethylallyltransferase (350 aa).

Position 34 to 41 (34 to 41 (GPTASGKT)) interacts with ATP. 36-41 (TASGKT) contributes to the substrate binding site. Interaction with substrate tRNA stretches follow at residues 63-66 (DSAL), 187-191 (QRIQR), and 274-279 (RCVGYR).

Belongs to the IPP transferase family. As to quaternary structure, monomer. Mg(2+) is required as a cofactor.

It catalyses the reaction adenosine(37) in tRNA + dimethylallyl diphosphate = N(6)-dimethylallyladenosine(37) in tRNA + diphosphate. In terms of biological role, catalyzes the transfer of a dimethylallyl group onto the adenine at position 37 in tRNAs that read codons beginning with uridine, leading to the formation of N6-(dimethylallyl)adenosine (i(6)A). The chain is tRNA dimethylallyltransferase from Paracidovorax citrulli (strain AAC00-1) (Acidovorax citrulli).